Here is a 289-residue protein sequence, read N- to C-terminus: Ubiquinone biosynthesis O-methyltransferase (289 aa).

Arg-36 contributes to the S-adenosyl-L-methionine binding site. Residues 50–98 (RHLSKLTYREELVGNMQHSTAAYALVREDASSRLTHKLPLEAEFEKMSN) form the RPE1 insert domain. Residues Gly-109, Asp-130, and Leu-172 each contribute to the S-adenosyl-L-methionine site.

It belongs to the methyltransferase superfamily. UbiG/COQ3 family.

The enzyme catalyses a 3-demethylubiquinol + S-adenosyl-L-methionine = a ubiquinol + S-adenosyl-L-homocysteine + H(+). The catalysed reaction is a 3-(all-trans-polyprenyl)benzene-1,2-diol + S-adenosyl-L-methionine = a 2-methoxy-6-(all-trans-polyprenyl)phenol + S-adenosyl-L-homocysteine + H(+). Its pathway is cofactor biosynthesis; ubiquinone biosynthesis. Its function is as follows. O-methyltransferase that catalyzes the 2 O-methylation steps in the ubiquinone biosynthetic pathway. The sequence is that of Ubiquinone biosynthesis O-methyltransferase from Rickettsia conorii (strain ATCC VR-613 / Malish 7).